The following is a 203-amino-acid chain: ATP-dependent Clp protease proteolytic subunit (203 aa).

Serine 107 functions as the Nucleophile in the catalytic mechanism. Residue histidine 132 is part of the active site.

Belongs to the peptidase S14 family. In terms of assembly, fourteen ClpP subunits assemble into 2 heptameric rings which stack back to back to give a disk-like structure with a central cavity, resembling the structure of eukaryotic proteasomes.

The protein resides in the cytoplasm. The enzyme catalyses Hydrolysis of proteins to small peptides in the presence of ATP and magnesium. alpha-casein is the usual test substrate. In the absence of ATP, only oligopeptides shorter than five residues are hydrolyzed (such as succinyl-Leu-Tyr-|-NHMec, and Leu-Tyr-Leu-|-Tyr-Trp, in which cleavage of the -Tyr-|-Leu- and -Tyr-|-Trp bonds also occurs).. Functionally, cleaves peptides in various proteins in a process that requires ATP hydrolysis. Has a chymotrypsin-like activity. Plays a major role in the degradation of misfolded proteins. In Shewanella pealeana (strain ATCC 700345 / ANG-SQ1), this protein is ATP-dependent Clp protease proteolytic subunit.